A 538-amino-acid polypeptide reads, in one-letter code: Sodium/hydrogen exchanger 1 (538 aa).

Residues 1 to 19 lie on the Cytoplasmic side of the membrane; the sequence is MLDSLVSKLPSLSTSDHAS. The helical transmembrane segment at 20-40 threads the bilayer; that stretch reads VVALNLFVALLCACIVLGHLL. The Vacuolar segment spans residues 41 to 45; it reads EENRW. The helical transmembrane segment at 46 to 66 threads the bilayer; the sequence is MNESITALLIGLGTGVTILLI. Residues 67 to 73 lie on the Cytoplasmic side of the membrane; it reads SKGKSSH. Positions 74–94 form an intramembrane region, helical; sequence LLVFSEDLFFIYLLPPIIFNA. Topologically, residues 95–106 are cytoplasmic; the sequence is GFQVKKKQFFRN. A helical transmembrane segment spans residues 107-127; sequence FVTIMLFGAVGTIISCTIISL. The Vacuolar portion of the chain corresponds to 128-146; that stretch reads GVTQFFKKLDIGTFDLGDY. 2 consecutive intramembrane regions (helical) follow at residues 147 to 166 and 172 to 192; these read LAIGAIFAATDSVCTLQVLN and LLYSLVFGEGVVNDATSVVVF. At 193 to 216 the chain is on the vacuolar side; sequence NAIQSFDLTHLNHEAAFHLLGNFL. Residues 217–237 traverse the membrane as a helical segment; that stretch reads YLFLLSTLLGAATGLISAYVI. Residues 238–262 are Cytoplasmic-facing; it reads KKLYFGRHSTDREVALMMLMAYLSY. The chain crosses the membrane as a helical span at residues 263 to 283; the sequence is MLAELFDLSGILTVFFCGIVM. Over 284 to 302 the chain is Vacuolar; that stretch reads SHYTWHNVTESSRITTKHT. N-linked (GlcNAc...) asparagine glycosylation occurs at Asn-290. The helical transmembrane segment at 303–323 threads the bilayer; it reads FATLSFLAETFIFLYVGMDAL. Over 324–342 the chain is Cytoplasmic; sequence DIDKWRSVSDTPGTSIAVS. Residues 343–363 traverse the membrane as a helical segment; the sequence is SILMGLVMVGRAAFVFPLSFL. The Vacuolar portion of the chain corresponds to 364 to 378; it reads SNLAKKNQSEKINFN. Asn-370 is a glycosylation site (N-linked (GlcNAc...) asparagine). A helical transmembrane segment spans residues 379-399; sequence MQVVIWWSGLMRGAVSMALAY. The Cytoplasmic portion of the chain corresponds to 400-413; sequence NKFTRAGHTDVRGN. A helical transmembrane segment spans residues 414-434; sequence AIMITSTITVCLFSTVVFGML. At 435–538 the chain is on the vacuolar side; the sequence is TKPLISYLLP…ERNPPDLSKA (104 aa). The N-linked (GlcNAc...) asparagine glycan is linked to Asn-447. The tract at residues 496 to 518 is interaction with CML18/CAM15; it reads RTVHYYWRQFDDSFMRPVFGGRG.

This sequence belongs to the monovalent cation:proton antiporter 1 (CPA1) transporter (TC 2.A.36) family. Calcium and pH-dependent interaction with CML18/CAM15 (increases when pH decreases, better at pH 5.5 than at pH 7.5). In terms of tissue distribution, ubiquitous, with higher levels around vascular tissues and guard cells.

The protein resides in the vacuole membrane. The protein localises to the endoplasmic reticulum membrane. Its subcellular location is the golgi apparatus membrane. It carries out the reaction Na(+)(in) + H(+)(out) = Na(+)(out) + H(+)(in). It catalyses the reaction K(+)(in) + H(+)(out) = K(+)(out) + H(+)(in). In terms of biological role, acts in low affinity electroneutral exchange of protons for cations such as Na(+) or K(+) across membranes. Can also exchange Li(+) and Cs(+) with a lower affinity. Involved in vacuolar ion compartmentalization necessary for cell volume regulation and cytoplasmic Na(+) detoxification. Required during leaves expansion, probably to stimulate epidermal cell expansion. Confers competence to grow in high salinity conditions. This Arabidopsis thaliana (Mouse-ear cress) protein is Sodium/hydrogen exchanger 1 (NHX1).